The sequence spans 258 residues: Zinc import ATP-binding protein ZnuC (258 aa).

The ABC transporter domain occupies 7 to 233; it reads ITAKNINHAY…PAFQELFGQG (227 aa). 39-46 provides a ligand contact to ATP; sequence GPNGAGKS.

This sequence belongs to the ABC transporter superfamily. Zinc importer (TC 3.A.1.15.5) family. In terms of assembly, the complex is composed of two ATP-binding proteins (ZnuC), two transmembrane proteins (ZnuB) and a solute-binding protein (ZnuA).

The protein localises to the cell inner membrane. It catalyses the reaction Zn(2+)(out) + ATP(in) + H2O(in) = Zn(2+)(in) + ADP(in) + phosphate(in) + H(+)(in). In terms of biological role, part of the ABC transporter complex ZnuABC involved in zinc import. Responsible for energy coupling to the transport system. This Hydrogenovibrio crunogenus (strain DSM 25203 / XCL-2) (Thiomicrospira crunogena) protein is Zinc import ATP-binding protein ZnuC.